The following is a 355-amino-acid chain: tRNA-specific 2-thiouridylase MnmA 1 (355 aa).

6–13 (LLSGGVDS) contacts ATP. Residues 92-94 (NPD) are interaction with target base in tRNA. Residue cysteine 97 is the Nucleophile of the active site. Cysteine 97 and cysteine 192 are oxidised to a cystine. Glycine 120 lines the ATP pocket. The tract at residues 142 to 144 (KDQ) is interaction with tRNA. Cysteine 192 serves as the catalytic Cysteine persulfide intermediate.

The protein belongs to the MnmA/TRMU family.

It is found in the cytoplasm. It catalyses the reaction S-sulfanyl-L-cysteinyl-[protein] + uridine(34) in tRNA + AH2 + ATP = 2-thiouridine(34) in tRNA + L-cysteinyl-[protein] + A + AMP + diphosphate + H(+). In terms of biological role, catalyzes the 2-thiolation of uridine at the wobble position (U34) of tRNA, leading to the formation of s(2)U34. The polypeptide is tRNA-specific 2-thiouridylase MnmA 1 (Bacteroides thetaiotaomicron (strain ATCC 29148 / DSM 2079 / JCM 5827 / CCUG 10774 / NCTC 10582 / VPI-5482 / E50)).